Here is a 741-residue protein sequence, read N- to C-terminus: NAD(P)H-quinone oxidoreductase subunit 5, chloroplastic (741 aa).

16 helical membrane passes run 9 to 29 (WIIPFLPLPVPMLIGLGLLLF), 40 to 60 (WAFQSVLLLSIVMIFSMNLSI), 89 to 109 (IDPLTSIMSILITTVGIMVLI), 125 to 145 (FAYMSFFSTSMLGLVTSSNLI), 147 to 167 (IYIFWELVGMCSYLLIGFWFT), 185 to 205 (GDFGLLLGILGFYWITGSFEF), 219 to 239 (NEVNLLFVTLCAVLLFAGAIA), 258 to 278 (TPISALIHAATMVAAGIFLVA), 284 to 304 (FIVIPHIMNFISLIGIITVFF), 327 to 347 (LGYMMLALGMGSYRSALFHLI), 354 to 374 (ALLFLGSGSVIHSMETLVGYC), 396 to 416 (NSFLLGTLSLCGIPPLACFWS), 425 to 445 (WLYSPIFAIIAWSTAGLTAFY), 549 to 569 (LFPILIFIPFTLFVGFLGIPF), 605 to 625 (VFSVSIASFGIFIAFFLYKPV), and 721 to 741 (YLFFYFSYVSIFLLIYYFLNF).

Belongs to the complex I subunit 5 family. As to quaternary structure, NDH is composed of at least 16 different subunits, 5 of which are encoded in the nucleus.

It is found in the plastid. Its subcellular location is the chloroplast thylakoid membrane. It catalyses the reaction a plastoquinone + NADH + (n+1) H(+)(in) = a plastoquinol + NAD(+) + n H(+)(out). The catalysed reaction is a plastoquinone + NADPH + (n+1) H(+)(in) = a plastoquinol + NADP(+) + n H(+)(out). NDH shuttles electrons from NAD(P)H:plastoquinone, via FMN and iron-sulfur (Fe-S) centers, to quinones in the photosynthetic chain and possibly in a chloroplast respiratory chain. The immediate electron acceptor for the enzyme in this species is believed to be plastoquinone. Couples the redox reaction to proton translocation, and thus conserves the redox energy in a proton gradient. The protein is NAD(P)H-quinone oxidoreductase subunit 5, chloroplastic (ndhF) of Flaveria ramosissima (Yellowtops).